The sequence spans 297 residues: Bifunctional protein FolD (297 aa).

NADP(+) contacts are provided by residues 168 to 170 (GRS), Thr-197, and Val-238.

Belongs to the tetrahydrofolate dehydrogenase/cyclohydrolase family. As to quaternary structure, homodimer.

The enzyme catalyses (6R)-5,10-methylene-5,6,7,8-tetrahydrofolate + NADP(+) = (6R)-5,10-methenyltetrahydrofolate + NADPH. It catalyses the reaction (6R)-5,10-methenyltetrahydrofolate + H2O = (6R)-10-formyltetrahydrofolate + H(+). Its pathway is one-carbon metabolism; tetrahydrofolate interconversion. Catalyzes the oxidation of 5,10-methylenetetrahydrofolate to 5,10-methenyltetrahydrofolate and then the hydrolysis of 5,10-methenyltetrahydrofolate to 10-formyltetrahydrofolate. The polypeptide is Bifunctional protein FolD (Lawsonia intracellularis (strain PHE/MN1-00)).